We begin with the raw amino-acid sequence, 360 residues long: Peptide chain release factor 1 (360 aa).

Position 235 is an N5-methylglutamine (Q235).

This sequence belongs to the prokaryotic/mitochondrial release factor family. Post-translationally, methylated by PrmC. Methylation increases the termination efficiency of RF1.

It is found in the cytoplasm. In terms of biological role, peptide chain release factor 1 directs the termination of translation in response to the peptide chain termination codons UAG and UAA. The polypeptide is Peptide chain release factor 1 (Blochmanniella pennsylvanica (strain BPEN)).